The sequence spans 464 residues: Mitogen-activated protein kinase 10 (464 aa).

The Protein kinase domain occupies 64 to 359; it reads YQNLKPIGSG…VDDALQHPYI (296 aa). Residues 70-78 and lysine 93 each bind ATP; that span reads IGSGAQGIV. Aspartate 189 serves as the catalytic Proton acceptor. At threonine 221 the chain carries Phosphothreonine; by MAP2K7. A TXY motif is present at residues 221-223; it reads TPY. Residue tyrosine 223 is modified to Phosphotyrosine; by MAP2K4. A disordered region spans residues 405–464; that stretch reads TKNGVVKGQPSPSGAAVNSSESLPPSSSVNDISSMSTDQTLASDTDSSLEASAGPLGCCR. The segment covering 423 to 432 has biased composition (low complexity); that stretch reads SSESLPPSSS. The span at 433–454 shows a compositional bias: polar residues; it reads VNDISSMSTDQTLASDTDSSLE. S-palmitoyl cysteine attachment occurs at residues cysteine 462 and cysteine 463.

The protein belongs to the protein kinase superfamily. CMGC Ser/Thr protein kinase family. MAP kinase subfamily. In terms of assembly, interacts with MAPK8IP1/JIP-1 and MAPK8IP3/JIP-3/JSAP1. Interacts with SPAG9/MAPK8IP4/JIP4. Interacts with HDAC9 and MAPKBP1. Interacts with ARRB2; the interaction enhances MAPK10 activation by MAP3K5. Interacts with SARM1. Interacts with JUND; interaction is inhibited in the presence of MEN1. Mg(2+) is required as a cofactor. In terms of processing, dually phosphorylated on Thr-221 and Tyr-223 by MAP2K4 and MAP2K7, which activates the enzyme. MAP2K7 shows a strong preference for Thr-221 while MAP2K4 phosphorylates Tyr-223 preferentially. Weakly autophosphorylated on threonine and tyrosine residues in vitro. Palmitoylation regulates subcellular location and axonal development.

The protein localises to the cytoplasm. It localises to the membrane. It is found in the nucleus. Its subcellular location is the mitochondrion. It catalyses the reaction L-seryl-[protein] + ATP = O-phospho-L-seryl-[protein] + ADP + H(+). It carries out the reaction L-threonyl-[protein] + ATP = O-phospho-L-threonyl-[protein] + ADP + H(+). Its activity is regulated as follows. Activated by threonine and tyrosine phosphorylation by two dual specificity kinases, MAP2K4 and MAP2K7. MAP2K7 phosphorylates MAPK10 on Thr-221 causing a conformational change and a large increase in Vmax for the enzyme. MAP2K4 then phosphorylates Tyr-223 resulting in a further increase in Vmax. Inhibited by dual specificity phosphatases, such as DUSP1. Inhibited by HDAC9. Serine/threonine-protein kinase involved in various processes such as neuronal proliferation, differentiation, migration and programmed cell death. Extracellular stimuli such as pro-inflammatory cytokines or physical stress stimulate the stress-activated protein kinase/c-Jun N-terminal kinase (SAP/JNK) signaling pathway. In this cascade, two dual specificity kinases MAP2K4/MKK4 and MAP2K7/MKK7 phosphorylate and activate MAPK10/JNK3. In turn, MAPK10/JNK3 phosphorylates a number of transcription factors, primarily components of AP-1 such as JUN and ATF2 and thus regulates AP-1 transcriptional activity. Plays regulatory roles in the signaling pathways during neuronal apoptosis. Phosphorylates the neuronal microtubule regulator STMN2. Acts in the regulation of the amyloid-beta precursor protein/APP signaling during neuronal differentiation by phosphorylating APP. Also participates in neurite growth in spiral ganglion neurons. Phosphorylates the CLOCK-BMAL1 heterodimer and plays a role in the photic regulation of the circadian clock. Phosphorylates JUND and this phosphorylation is inhibited in the presence of MEN1. The protein is Mitogen-activated protein kinase 10 (Mapk10) of Rattus norvegicus (Rat).